Reading from the N-terminus, the 195-residue chain is uncharacterized protein (195 aa).

Disordered stretches follow at residues 1–51 (MTHN…GPSY) and 160–195 (SYSQQQEPQHYYKKHKHHSHHRPKHVKSSRSCKSCN). Polar residues predominate over residues 13–28 (SYQNQAPQPQYYTRQP). Basic residues predominate over residues 170-189 (YYKKHKHHSHHRPKHVKSSR).

This is an uncharacterized protein from Acanthamoeba polyphaga mimivirus (APMV).